The primary structure comprises 129 residues: Glycine cleavage system H protein (129 aa).

A Lipoyl-binding domain is found at 24–106; sequence IATIGISAFA…YGEGWLVKVR (83 aa). Lysine 65 carries the post-translational modification N6-lipoyllysine.

This sequence belongs to the GcvH family. The glycine cleavage system is composed of four proteins: P, T, L and H. The cofactor is (R)-lipoate.

The glycine cleavage system catalyzes the degradation of glycine. The H protein shuttles the methylamine group of glycine from the P protein to the T protein. The chain is Glycine cleavage system H protein from Cyanothece sp. (strain PCC 7425 / ATCC 29141).